The chain runs to 324 residues: uncharacterized protein (324 aa).

8 helical membrane-spanning segments follow: residues 5-24, 39-61, 68-90, 95-117, 130-152, 162-179, 199-218, and 228-250; these read VIGI…NRAM, FIFM…PLLL, FYWI…FAAA, WLIA…LFYV, QKIP…LIQL, MLLF…AYPL, LGMT…YGWW, and TVQS…FWAT.

It localises to the cell membrane. This is an uncharacterized protein from Bacillus subtilis (strain 168).